The following is a 361-amino-acid chain: tRNA-specific 2-thiouridylase MnmA (361 aa).

ATP is bound by residues 8–15 (AMSGGVDS) and Met35. An interaction with target base in tRNA region spans residues 95–97 (NPD). The Nucleophile role is filled by Cys100. Residues Cys100 and Cys196 are joined by a disulfide bond. Gly124 is a binding site for ATP. The interaction with tRNA stretch occupies residues 146–148 (KDQ). Catalysis depends on Cys196, which acts as the Cysteine persulfide intermediate. The segment at 303-304 (RY) is interaction with tRNA.

The protein belongs to the MnmA/TRMU family.

It localises to the cytoplasm. The catalysed reaction is S-sulfanyl-L-cysteinyl-[protein] + uridine(34) in tRNA + AH2 + ATP = 2-thiouridine(34) in tRNA + L-cysteinyl-[protein] + A + AMP + diphosphate + H(+). Functionally, catalyzes the 2-thiolation of uridine at the wobble position (U34) of tRNA, leading to the formation of s(2)U34. The polypeptide is tRNA-specific 2-thiouridylase MnmA (Chlamydia felis (strain Fe/C-56) (Chlamydophila felis)).